We begin with the raw amino-acid sequence, 395 residues long: RNA polymerase II elongation factor ELL3 (395 aa).

Disordered regions lie at residues 124-149, 163-182, 194-218, and 233-279; these read SSLQ…DYPE, VPDP…SREH, LPNR…KRPA, and LAPS…SLSP. A compositionally biased stretch (basic and acidic residues) spans 130-140; sequence NRTEDARDRES. The span at 168-177 shows a compositional bias: polar residues; sequence ASSQGQSLPG. Positions 246-258 are enriched in acidic residues; sequence LQEEDWEQEDKDE. Over residues 268 to 277 the composition is skewed to polar residues; it reads PSVQADSESL. Residues 283–393 form the OCEL domain; that stretch reads PDYLLQYRAI…LILEFEEKNR (111 aa).

It belongs to the ELL/occludin family. As to quaternary structure, interacts with AFF4. Component of the super elongation complex (SEC), at least composed of EAF1, EAF2, CDK9, MLLT3/AF9, AFF (AFF1 or AFF4), the P-TEFb complex and ELL (ELL, ELL2 or ELL3). Component of the little elongation complex (LEC), at least composed of ELL (ELL, ELL2 or ELL3), ZC3H8, ICE1 and ICE2.

It localises to the nucleus. In terms of biological role, enhancer-binding elongation factor that specifically binds enhancers in embryonic stem cells (ES cells), marks them, and is required for their future activation during stem cell specification. Elongation factor component of the super elongation complex (SEC), a complex required to increase the catalytic rate of RNA polymerase II transcription by suppressing transient pausing by the polymerase at multiple sites along the DNA. Component of the little elongation complex (LEC), a complex required to regulate small nuclear RNA (snRNA) gene transcription by RNA polymerase II and III. Does not only bind to enhancer regions of active genes, but also marks the enhancers that are in a poised or inactive state in ES cells and is required for establishing proper RNA polymerase II occupancy at developmentally regulated genes in a cohesin-dependent manner. Probably required for priming developmentally regulated genes for later recruitment of the super elongation complex (SEC), for transcriptional activation during differentiation. Required for recruitment of P-TEFb within SEC during differentiation. Probably preloaded on germ cell chromatin, suggesting that it may prime gene activation by marking enhancers as early as in the germ cells. Promoting epithelial-mesenchymal transition (EMT). This Bos taurus (Bovine) protein is RNA polymerase II elongation factor ELL3 (ELL3).